Reading from the N-terminus, the 338-residue chain is NAC domain-containing protein 46 (338 aa).

In terms of domain architecture, NAC spans 20–171 (LPPGFRFHPT…EWVVCRVFHK (152 aa)). A DNA-binding region spans residues 118 to 177 (VGMKKTLVFYTGRAPKGEKTNWVMHEYRLDGKYSYHNLPKTARDEWVVCRVFHKNAPSTT).

As to quaternary structure, interacts with RCD1.

The protein resides in the nucleus. Transcriptional activator that acts as a positive regulator of leaf senescence. Activates NYC1, SGR1, SGR2 and PAO, which are genes involved in chlorophyll catabolic processes. Activates senescence-associated genes, such as RNS1, SAG12 and SAG13. This chain is NAC domain-containing protein 46, found in Arabidopsis thaliana (Mouse-ear cress).